The chain runs to 698 residues: Elongation factor G (698 aa).

In terms of domain architecture, tr-type G spans 8 to 290 (ERYRNIGIAA…AVIEFLPAPN (283 aa)). GTP is bound by residues 17-24 (AHIDAGKT), 88-92 (DTPGH), and 142-145 (NKMD).

This sequence belongs to the TRAFAC class translation factor GTPase superfamily. Classic translation factor GTPase family. EF-G/EF-2 subfamily.

The protein resides in the cytoplasm. Catalyzes the GTP-dependent ribosomal translocation step during translation elongation. During this step, the ribosome changes from the pre-translocational (PRE) to the post-translocational (POST) state as the newly formed A-site-bound peptidyl-tRNA and P-site-bound deacylated tRNA move to the P and E sites, respectively. Catalyzes the coordinated movement of the two tRNA molecules, the mRNA and conformational changes in the ribosome. In Halorhodospira halophila (strain DSM 244 / SL1) (Ectothiorhodospira halophila (strain DSM 244 / SL1)), this protein is Elongation factor G.